The primary structure comprises 205 residues: Small ribosomal subunit protein uS4B (205 aa).

Residues 94–157 (RRLDNVVFRA…LNLPIVLGTL (64 aa)) form the S4 RNA-binding domain.

It belongs to the universal ribosomal protein uS4 family. In terms of assembly, part of the 30S ribosomal subunit. Contacts protein S5. The interaction surface between S4 and S5 is involved in control of translational fidelity.

In terms of biological role, one of the primary rRNA binding proteins, it binds directly to 16S rRNA where it nucleates assembly of the body of the 30S subunit. With S5 and S12 plays an important role in translational accuracy. This is Small ribosomal subunit protein uS4B from Nitrosomonas europaea (strain ATCC 19718 / CIP 103999 / KCTC 2705 / NBRC 14298).